A 255-amino-acid chain; its full sequence is MWIGIISLFPEMFRAITDYGVTGRAVKNGLLSIESWSPRDFTHDRHRTVDDRPYGGGPGMLMMVQPLRDAIHAAKAAAGEGAKVIYLSPQGRKLDQAGVSELATNQKLILVCGRYEGIDERVIQTEIDEEWSIGDYVLSGGELPAMTLIDSVSRFIPGVLGHEASATEDSFADGLLDCPHYTRPEVLEEMEVPPVLLSGNHAEIRRWRLKQSLGRTWLRRPELLENLALTEEQAKLLSEFKTEHAQQQHKHDGQA.

Residues G113 and 133–138 (IGDYVL) contribute to the S-adenosyl-L-methionine site.

The protein belongs to the RNA methyltransferase TrmD family. Homodimer.

Its subcellular location is the cytoplasm. The catalysed reaction is guanosine(37) in tRNA + S-adenosyl-L-methionine = N(1)-methylguanosine(37) in tRNA + S-adenosyl-L-homocysteine + H(+). In terms of biological role, specifically methylates guanosine-37 in various tRNAs. The chain is tRNA (guanine-N(1)-)-methyltransferase from Klebsiella pneumoniae subsp. pneumoniae (strain ATCC 700721 / MGH 78578).